The chain runs to 466 residues: Cysteine--tRNA ligase (466 aa).

Position 29 (C29) interacts with Zn(2+). Positions A31–H41 match the 'HIGH' region motif. The Zn(2+) site is built by C208, H233, and E237. The 'KMSKS' region signature appears at K264 to S268. K267 is an ATP binding site.

Belongs to the class-I aminoacyl-tRNA synthetase family. As to quaternary structure, monomer. Zn(2+) serves as cofactor.

It localises to the cytoplasm. It carries out the reaction tRNA(Cys) + L-cysteine + ATP = L-cysteinyl-tRNA(Cys) + AMP + diphosphate. The chain is Cysteine--tRNA ligase from Streptomyces griseus subsp. griseus (strain JCM 4626 / CBS 651.72 / NBRC 13350 / KCC S-0626 / ISP 5235).